The chain runs to 308 residues: Reticulon-like protein 1 (308 aa).

Composition is skewed to polar residues over residues 1 to 17 and 41 to 66; these read MSEQHSLNPFESGSVTA and PSTELPSATSFPSALPNSENPVIQNI. Disordered regions lie at residues 1 to 22 and 41 to 92; these read MSEQHSLNPFESGSVTASDVAA and PSTE…CPVS. Asparagine 65 carries an N-linked (GlcNAc...) asparagine glycan. The span at 67 to 81 shows a compositional bias: low complexity; sequence SSSSSEPHHTSQSTP. N-linked (GlcNAc...) asparagine glycans are attached at residues asparagine 113 and asparagine 135. Positions 127–308 constitute a Reticulon domain; that stretch reads LWSVLTWKNT…TETINTTVNK (182 aa). A run of 4 helical transmembrane segments spans residues 138–158, 166–186, 233–253, and 255–275; these read CSFSTLMSILALVYVPSWINL, FRYVFLITSIIEFGGLFASNG, PILTFTASVAAFIEFFLSGFL, and YKSLFVWNVLFAFILPRLYVC. Asparagine 303 carries N-linked (GlcNAc...) asparagine glycosylation.

As to quaternary structure, interacts with TTS1 and YOP1.

It localises to the endoplasmic reticulum membrane. It is found in the nucleus membrane. Required for the correct positioning of the cellular division plane by delimiting the actomyosin ring assembly at the cell equator. Overexpression causes cell lysis. This chain is Reticulon-like protein 1 (rtn1), found in Schizosaccharomyces pombe (strain 972 / ATCC 24843) (Fission yeast).